Here is a 265-residue protein sequence, read N- to C-terminus: Undecaprenyl-diphosphatase (265 aa).

Transmembrane regions (helical) follow at residues 1–21 (MDFI…FLPI), 39–61 (QGLA…YFRL), 85–105 (LAWA…MLTE), 115–135 (LIIA…DWAG), 149–169 (ILFI…RSGI), 187–207 (FSFL…ALDL), 218–238 (ALAL…HYFF), and 244–264 (IGML…FYLF).

It belongs to the UppP family.

It is found in the cell inner membrane. It catalyses the reaction di-trans,octa-cis-undecaprenyl diphosphate + H2O = di-trans,octa-cis-undecaprenyl phosphate + phosphate + H(+). Catalyzes the dephosphorylation of undecaprenyl diphosphate (UPP). Confers resistance to bacitracin. This is Undecaprenyl-diphosphatase from Nitrosococcus oceani (strain ATCC 19707 / BCRC 17464 / JCM 30415 / NCIMB 11848 / C-107).